Reading from the N-terminus, the 483-residue chain is Probable ATP-dependent RNA helicase DDX6 (483 aa).

The tract at residues 1–40 is disordered; the sequence is MSTARTENPVIMGLSSQNGQLRGPVKPTGGPGGGGTQTQQ. A Phosphothreonine modification is found at T36. The short motif at 96–124 is the Q motif element; sequence NEFEDYCLKRELLMGIFEMGWEKPSPIQE. Positions 127–298 constitute a Helicase ATP-binding domain; that stretch reads IPIALSGRDI…NSHLQKPYEI (172 aa). Position 140-147 (140-147) interacts with ATP; it reads AKNGTGKS. The DEAD box motif lies at 246–249; sequence DEAD. Residues 308–468 enclose the Helicase C-terminal domain; the sequence is GVTQYYAYVT…PIPSNIDKSL (161 aa).

This sequence belongs to the DEAD box helicase family. DDX6/DHH1 subfamily. In terms of assembly, interacts with LSM14A, LSM14B, EIF4ENIF1/4E-T, PATL1, EDC3 and EDC4. Forms a complex with DCP1A, DCP2, EDC3 and EDC4/HEDLS. Interacts with LIMD1, WTIP and AJUBA. Interacts with APOBEC3G in an RNA-dependent manner. Interacts with RC3H1. Interacts with ATXN2L. Interacts with MCRIP1. Interacts with MCRIP2. Interacts with NUFIP2. Interacts with TRIM71 (via NHL repeats) in an RNA-dependent manner. Sumoylated.

Its subcellular location is the cytoplasm. The protein resides in the P-body. It localises to the nucleus. It is found in the cytoplasmic ribonucleoprotein granule. The catalysed reaction is ATP + H2O = ADP + phosphate + H(+). Essential for the formation of P-bodies, cytosolic membrane-less ribonucleoprotein granules involved in RNA metabolism through the coordinated storage of mRNAs encoding regulatory functions. Plays a role in P-bodies to coordinate the storage of translationally inactive mRNAs in the cytoplasm and prevent their degradation. In the process of mRNA degradation, plays a role in mRNA decapping. Blocks autophagy in nutrient-rich conditions by repressing the expression of ATG-related genes through degradation of their transcripts. The polypeptide is Probable ATP-dependent RNA helicase DDX6 (DDX6) (Pongo abelii (Sumatran orangutan)).